Reading from the N-terminus, the 132-residue chain is Small ribosomal subunit protein eS24 (132 aa).

A compositionally biased stretch (basic and acidic residues) spans 92-101 (LARHGLYEKK). Residues 92–132 (LARHGLYEKKRPTRKQRKERKNRMKKVRGTKKSKVGAAAKK) form a disordered region. The span at 102–132 (RPTRKQRKERKNRMKKVRGTKKSKVGAAAKK) shows a compositional bias: basic residues.

This sequence belongs to the eukaryotic ribosomal protein eS24 family.

In Spodoptera frugiperda (Fall armyworm), this protein is Small ribosomal subunit protein eS24 (RpS24).